The chain runs to 278 residues: Large ribosomal subunit protein uL2 (278 aa).

2 stretches are compositionally biased toward basic residues: residues 210–220 (GRMRWKGKRPS) and 257–278 (TRRKHKPSDKLIVRRRKSNKKR). Positions 210-278 (GRMRWKGKRP…VRRRKSNKKR (69 aa)) are disordered.

This sequence belongs to the universal ribosomal protein uL2 family. In terms of assembly, part of the 50S ribosomal subunit. Forms a bridge to the 30S subunit in the 70S ribosome.

In terms of biological role, one of the primary rRNA binding proteins. Required for association of the 30S and 50S subunits to form the 70S ribosome, for tRNA binding and peptide bond formation. It has been suggested to have peptidyltransferase activity; this is somewhat controversial. Makes several contacts with the 16S rRNA in the 70S ribosome. This is Large ribosomal subunit protein uL2 from Acidothermus cellulolyticus (strain ATCC 43068 / DSM 8971 / 11B).